Here is a 936-residue protein sequence, read N- to C-terminus: Translation initiation factor IF-2 (936 aa).

A disordered region spans residues 102 to 332 (PEPGPVLKKD…SGSRQKFRKM (231 aa)). The segment covering 108–119 (LKKDHVHEEPEK) has biased composition (basic and acidic residues). The segment covering 127 to 137 (SEPEVEPEVEP) has biased composition (acidic residues). The span at 151-160 (PTEAVSVPEP) shows a compositional bias: low complexity. Over residues 182–194 (QSSTMKAQASPEM) the composition is skewed to polar residues. 2 stretches are compositionally biased toward basic and acidic residues: residues 217–227 (SALDRGSESDR) and 237–267 (KEQA…EAKT). Residues 272–281 (KAAGTTGSAA) show a composition bias toward low complexity. Residues 287 to 297 (SKKKKGGKKKK) show a composition bias toward basic residues. The region spanning 433–603 (IRPPVVTIMG…LMEAEIRELK (171 aa)) is the tr-type G domain. Residues 442 to 449 (GHVDHGKT) form a G1 region. GTP is bound at residue 442–449 (GHVDHGKT). The segment at 467–471 (GITQH) is G2. The tract at residues 489–492 (DTPG) is G3. GTP-binding positions include 489–493 (DTPGH) and 543–546 (NKID). The interval 543–546 (NKID) is G4. A G5 region spans residues 579-581 (SAK).

It belongs to the TRAFAC class translation factor GTPase superfamily. Classic translation factor GTPase family. IF-2 subfamily.

The protein localises to the cytoplasm. One of the essential components for the initiation of protein synthesis. Protects formylmethionyl-tRNA from spontaneous hydrolysis and promotes its binding to the 30S ribosomal subunits. Also involved in the hydrolysis of GTP during the formation of the 70S ribosomal complex. This chain is Translation initiation factor IF-2, found in Prosthecochloris aestuarii (strain DSM 271 / SK 413).